Consider the following 97-residue polypeptide: Putative membrane protein insertion efficiency factor (97 aa).

Residues 68–97 (VPGTELNTAPRSGQACNPTESTHSTTQTRH) are disordered. A compositionally biased stretch (polar residues) spans 72–97 (ELNTAPRSGQACNPTESTHSTTQTRH).

It belongs to the UPF0161 family.

The protein resides in the cell inner membrane. Its function is as follows. Could be involved in insertion of integral membrane proteins into the membrane. The protein is Putative membrane protein insertion efficiency factor of Marinobacter nauticus (strain ATCC 700491 / DSM 11845 / VT8) (Marinobacter aquaeolei).